Consider the following 250-residue polypeptide: Ureidoacrylate amidohydrolase RutB (250 aa).

The active-site Proton acceptor is Asp44. Lys153 is an active-site residue. The active-site Nucleophile is Cys186.

This sequence belongs to the isochorismatase family. RutB subfamily.

It catalyses the reaction (Z)-3-ureidoacrylate + H2O + H(+) = (Z)-3-aminoacrylate + NH4(+) + CO2. It carries out the reaction (Z)-3-ureidoacrylate + H2O = (Z)-3-aminoacrylate + carbamate + H(+). The enzyme catalyses (Z)-2-methylureidoacrylate + H2O + H(+) = (Z)-2-methylaminoacrylate + NH4(+) + CO2. Functionally, hydrolyzes ureidoacrylate to form aminoacrylate and carbamate. The carbamate hydrolyzes spontaneously, thereby releasing one of the nitrogen atoms of the pyrimidine ring as ammonia and one of its carbon atoms as CO2. The protein is Ureidoacrylate amidohydrolase RutB of Pantoea ananatis (strain LMG 20103).